Here is a 246-residue protein sequence, read N- to C-terminus: tRNA pseudouridine synthase A (246 aa).

Asp-52 serves as the catalytic Nucleophile. Tyr-111 provides a ligand contact to substrate.

This sequence belongs to the tRNA pseudouridine synthase TruA family. As to quaternary structure, homodimer.

It catalyses the reaction uridine(38/39/40) in tRNA = pseudouridine(38/39/40) in tRNA. Functionally, formation of pseudouridine at positions 38, 39 and 40 in the anticodon stem and loop of transfer RNAs. The chain is tRNA pseudouridine synthase A from Rhodopseudomonas palustris (strain BisA53).